We begin with the raw amino-acid sequence, 794 residues long: Protein IQ-DOMAIN 32 (794 aa).

Residues 15-101 are disordered; it reads CSGGDDTSAD…QSFSVDEKKS (87 aa). 2 stretches are compositionally biased toward polar residues: residues 23–33 and 56–65; these read ADPNSTALENK and SVVSETTPAS. Phosphoserine occurs at positions 78, 80, 142, 193, and 195. The span at 80 to 95 shows a compositional bias: polar residues; it reads SPDNNNVSEKQQQSFS. 2 IQ domains span residues 214-242 and 243-265; these read DESV…KVIK and LQAA…CVQA. The segment at 230 to 241 is calmodulin-binding; sequence ARRELLRSKKVI. The tract at residues 277–296 is disordered; sequence HSTKDGSRVSATSDKSEPNA. The residue at position 369 (Ser369) is a Phosphoserine. Residues 375–417 are disordered; that stretch reads VNSDSTVENKTETDMPSYEASKVEGQNVELSETEKMSQYDSPE. The residue at position 459 (Ser459) is a Phosphoserine. Disordered regions lie at residues 472 to 555 and 578 to 794; these read ELTS…RVEA and ATSM…KWQR. Residues 473 to 486 are compositionally biased toward polar residues; sequence LTSSTGSNKAMTLS. A compositionally biased stretch (basic and acidic residues) spans 487–500; sequence SKDDVLGEEGKTDI. Phosphoserine occurs at positions 502 and 544. Basic and acidic residues-rich tracts occupy residues 539–555 and 585–607; these read TLEK…RVEA and EDPK…HHEP. The span at 643–654 shows a compositional bias: low complexity; sequence SQATPASQASSS. Positions 657–664 match the Nuclear localization signal motif; the sequence is ARKGKSEK. A compositionally biased stretch (polar residues) spans 768-786; sequence NGKQVSPRIQRSASQAQQG.

It belongs to the IQD family. In terms of assembly, binds to multiple calmodulin (CaM) in the presence of Ca(2+) and CaM-like proteins.

It localises to the nucleus. Its subcellular location is the cytoplasm. The protein localises to the cytoskeleton. In terms of biological role, may be involved in cooperative interactions with calmodulins or calmodulin-like proteins. Recruits calmodulin proteins to microtubules, thus being a potential scaffold in cellular signaling and trafficking. May associate with nucleic acids and regulate gene expression at the transcriptional or post-transcriptional level. This is Protein IQ-DOMAIN 32 from Arabidopsis thaliana (Mouse-ear cress).